A 148-amino-acid polypeptide reads, in one-letter code: Large ribosomal subunit protein bL9 (148 aa).

Belongs to the bacterial ribosomal protein bL9 family.

Binds to the 23S rRNA. In Listeria monocytogenes serotype 4a (strain HCC23), this protein is Large ribosomal subunit protein bL9.